A 557-amino-acid chain; its full sequence is CTP synthase (557 aa).

An amidoligase domain region spans residues 1–267 (MAKFVFVTGG…CREVLDVLDL (267 aa)). CTP is bound at residue serine 13. Residue serine 13 participates in UTP binding. ATP-binding positions include 14-19 (SIGKGI) and aspartate 71. Aspartate 71 and glutamate 141 together coordinate Mg(2+). CTP-binding positions include 148–150 (DIE), 188–193 (KTKPTQ), and lysine 224. UTP-binding positions include 188 to 193 (KTKPTQ) and lysine 224. The Glutamine amidotransferase type-1 domain maps to 292–534 (KVALVGKYVQ…IEAAQQRLPC (243 aa)). L-glutamine is bound at residue glycine 354. The active-site Nucleophile; for glutamine hydrolysis is cysteine 381. L-glutamine is bound by residues 382–385 (LGMQ), glutamate 405, and arginine 462. Catalysis depends on residues histidine 507 and glutamate 509. Positions 532–557 (LPCSPSEAMRQQNNSAAGSSHPSLQP) are disordered. Residues 540 to 557 (MRQQNNSAAGSSHPSLQP) are compositionally biased toward polar residues.

The protein belongs to the CTP synthase family. In terms of assembly, homotetramer.

It carries out the reaction UTP + L-glutamine + ATP + H2O = CTP + L-glutamate + ADP + phosphate + 2 H(+). It catalyses the reaction L-glutamine + H2O = L-glutamate + NH4(+). The enzyme catalyses UTP + NH4(+) + ATP = CTP + ADP + phosphate + 2 H(+). It participates in pyrimidine metabolism; CTP biosynthesis via de novo pathway; CTP from UDP: step 2/2. With respect to regulation, allosterically activated by GTP, when glutamine is the substrate; GTP has no effect on the reaction when ammonia is the substrate. The allosteric effector GTP functions by stabilizing the protein conformation that binds the tetrahedral intermediate(s) formed during glutamine hydrolysis. Inhibited by the product CTP, via allosteric rather than competitive inhibition. Its function is as follows. Catalyzes the ATP-dependent amination of UTP to CTP with either L-glutamine or ammonia as the source of nitrogen. Regulates intracellular CTP levels through interactions with the four ribonucleotide triphosphates. The protein is CTP synthase of Synechococcus sp. (strain CC9311).